The following is a 113-amino-acid chain: Large ribosomal subunit protein uL22 (113 aa).

Belongs to the universal ribosomal protein uL22 family. As to quaternary structure, part of the 50S ribosomal subunit.

Its function is as follows. This protein binds specifically to 23S rRNA; its binding is stimulated by other ribosomal proteins, e.g. L4, L17, and L20. It is important during the early stages of 50S assembly. It makes multiple contacts with different domains of the 23S rRNA in the assembled 50S subunit and ribosome. In terms of biological role, the globular domain of the protein is located near the polypeptide exit tunnel on the outside of the subunit, while an extended beta-hairpin is found that lines the wall of the exit tunnel in the center of the 70S ribosome. The sequence is that of Large ribosomal subunit protein uL22 from Desulforamulus reducens (strain ATCC BAA-1160 / DSM 100696 / MI-1) (Desulfotomaculum reducens).